Consider the following 593-residue polypeptide: tRNA (guanine(26)-N(2))-dimethyltransferase 1 (593 aa).

One can recognise a Trm1 methyltransferase domain in the interval Thr-9–Met-465. Arg-36 lines the S-adenosyl-L-methionine pocket. The interval Ala-56–Glu-118 is disordered. Basic and acidic residues-rich tracts occupy residues Val-68–Thr-81 and Asp-88–Glu-118. Residues Arg-134, Asp-152, and Val-185 each contribute to the S-adenosyl-L-methionine site. The Zn(2+) site is built by Cys-315, Cys-318, Cys-350, and Cys-353. A disordered region spans residues Val-546 to Ser-593. Residues Gly-558–Glu-577 show a composition bias toward acidic residues. Positions Pro-578–Glu-587 are enriched in basic and acidic residues.

Belongs to the class I-like SAM-binding methyltransferase superfamily. Trm1 family.

It carries out the reaction guanosine(26) in tRNA + 2 S-adenosyl-L-methionine = N(2)-dimethylguanosine(26) in tRNA + 2 S-adenosyl-L-homocysteine + 2 H(+). Functionally, dimethylates a single guanine residue at position 26 of most tRNAs using S-adenosyl-L-methionine as donor of the methyl groups. This chain is tRNA (guanine(26)-N(2))-dimethyltransferase 1, found in Arabidopsis thaliana (Mouse-ear cress).